A 246-amino-acid polypeptide reads, in one-letter code: 3'(2'),5'-bisphosphate nucleotidase CysQ (246 aa).

The Mg(2+) site is built by Glu64, Asp83, Leu85, Asp86, and Asp205. Glu64 contacts substrate. Substrate contacts are provided by residues 85 to 88 (LDGT) and Asp205.

This sequence belongs to the inositol monophosphatase superfamily. CysQ family. Requires Mg(2+) as cofactor.

It is found in the cell inner membrane. The enzyme catalyses adenosine 3',5'-bisphosphate + H2O = AMP + phosphate. Its activity is regulated as follows. Inhibited by lithium and calcium. Its function is as follows. Converts adenosine-3',5'-bisphosphate (PAP) to AMP. May also convert adenosine 3'-phosphate 5'-phosphosulfate (PAPS) to adenosine 5'-phosphosulfate (APS). Has 10000-fold lower activity towards inositol 1,4-bisphosphate (Ins(1,4)P2). The polypeptide is 3'(2'),5'-bisphosphate nucleotidase CysQ (Escherichia coli (strain K12)).